We begin with the raw amino-acid sequence, 108 residues long: Large ribosomal subunit protein uL24 (108 aa).

It belongs to the universal ribosomal protein uL24 family. As to quaternary structure, part of the 50S ribosomal subunit.

In terms of biological role, one of two assembly initiator proteins, it binds directly to the 5'-end of the 23S rRNA, where it nucleates assembly of the 50S subunit. One of the proteins that surrounds the polypeptide exit tunnel on the outside of the subunit. This chain is Large ribosomal subunit protein uL24, found in Moorella thermoacetica (strain ATCC 39073 / JCM 9320).